The sequence spans 1088 residues: Protein argonaute 18 (1088 aa).

The disordered stretch occupies residues M1–P220. Composition is skewed to gly residues over residues G20 to R30, Y51 to R86, G95 to H127, G135 to Y148, A161 to G182, and G191 to S206. Positions Q211–P220 are enriched in pro residues. Positions T477–P574 constitute a PAZ domain. The 310-residue stretch at L747–T1056 folds into the Piwi domain.

The protein belongs to the argonaute family. Ago subfamily.

Probably involved in the RNA silencing pathway. May bind to short RNAs such as microRNAs (miRNAs) or short interfering RNAs (siRNAs), and represses the translation of mRNAs which are complementary to them. This chain is Protein argonaute 18 (AGO18), found in Oryza sativa subsp. japonica (Rice).